We begin with the raw amino-acid sequence, 174 residues long: Cell division protein FtsL (174 aa).

The Cytoplasmic portion of the chain corresponds to 1 to 38; the sequence is MLAAPRELSYIPQPVVSSKQSPRSGLSNRRRESRARQK. Residues 39–59 form a helical membrane-spanning segment; that stretch reads ILLLGLVLMGFVIGLSLTFLT. Over 60-174 the chain is Extracellular; that stretch reads MQVLIKGYKI…EPARQAGAGV (115 aa).

Belongs to the FtsL family.

The protein resides in the cell membrane. Its function is as follows. Essential cell division protein. The polypeptide is Cell division protein FtsL (Moorella thermoacetica (strain ATCC 39073 / JCM 9320)).